The following is a 627-amino-acid chain: Probable inactive L-type lectin-domain containing receptor kinase III.1 (627 aa).

The N-terminal stretch at 1–23 (MITFKSIALTIIFLSYFVSCVSS) is a signal peptide. At 24 to 303 (QRETKFLNHG…STEKKSNNTM (280 aa)) the chain is on the extracellular side. Positions 26-262 (ETKFLNHGFL…SHFVLGWSFN (237 aa)) are legume-lectin like. Residues N57, N78, N127, N184, N202, N209, and N230 are each glycosylated (N-linked (GlcNAc...) asparagine). The interval 272-297 (ITKLPSLPDPPPTLSPSPSPPVSTEK) is disordered. The segment covering 278–292 (LPDPPPTLSPSPSPP) has biased composition (pro residues). N300 carries an N-linked (GlcNAc...) asparagine glycan. The chain crosses the membrane as a helical span at residues 304-324 (LIIIVAASATVALMILIFSGF). The Cytoplasmic portion of the chain corresponds to 325–627 (WFLRRDKIFF…PHDDYLFYGV (303 aa)). Residues 353 to 623 (FDNSKLLGER…TEALPHDDYL (271 aa)) enclose the Protein kinase domain. ATP contacts are provided by residues 359 to 367 (LGERNSGSF) and K381.

This sequence in the C-terminal section; belongs to the protein kinase superfamily. Ser/Thr protein kinase family. The protein in the N-terminal section; belongs to the leguminous lectin family.

The protein resides in the cell membrane. The polypeptide is Probable inactive L-type lectin-domain containing receptor kinase III.1 (LECRK31) (Arabidopsis thaliana (Mouse-ear cress)).